The sequence spans 352 residues: Nicotinate-nucleotide--dimethylbenzimidazole phosphoribosyltransferase (352 aa).

The Proton acceptor role is filled by Glu-318.

This sequence belongs to the CobT family.

The catalysed reaction is 5,6-dimethylbenzimidazole + nicotinate beta-D-ribonucleotide = alpha-ribazole 5'-phosphate + nicotinate + H(+). The protein operates within nucleoside biosynthesis; alpha-ribazole biosynthesis; alpha-ribazole from 5,6-dimethylbenzimidazole: step 1/2. In terms of biological role, catalyzes the synthesis of alpha-ribazole-5'-phosphate from nicotinate mononucleotide (NAMN) and 5,6-dimethylbenzimidazole (DMB). The sequence is that of Nicotinate-nucleotide--dimethylbenzimidazole phosphoribosyltransferase from Dehalococcoides mccartyi (strain ATCC BAA-2100 / JCM 16839 / KCTC 5957 / BAV1).